Here is a 136-residue protein sequence, read N- to C-terminus: Large ribosomal subunit protein uL16 (136 aa).

Belongs to the universal ribosomal protein uL16 family. As to quaternary structure, part of the 50S ribosomal subunit.

Functionally, binds 23S rRNA and is also seen to make contacts with the A and possibly P site tRNAs. The chain is Large ribosomal subunit protein uL16 from Pelagibacter ubique (strain HTCC1062).